The chain runs to 252 residues: Ribose-5-phosphate isomerase (252 aa).

The protein belongs to the ribose 5-phosphate isomerase family.

It localises to the cytoplasm. It carries out the reaction aldehydo-D-ribose 5-phosphate = D-ribulose 5-phosphate. It participates in carbohydrate degradation; pentose phosphate pathway; D-ribose 5-phosphate from D-ribulose 5-phosphate (non-oxidative stage): step 1/1. In Debaryomyces hansenii (strain ATCC 36239 / CBS 767 / BCRC 21394 / JCM 1990 / NBRC 0083 / IGC 2968) (Yeast), this protein is Ribose-5-phosphate isomerase (RKI1).